The following is a 483-amino-acid chain: E3 ubiquitin-protein ligase TRIM50 (483 aa).

The RING-type zinc finger occupies 16–57 (CPICLEVFKEPLMLQCGHSYCKNCLDSLSEHLDSELRCPVCR). The B box-type zinc finger occupies 84 to 125 (TEPTVCVHHRNPLSLFCEKDQEFICGLCGLLGSHQHHRVTPV). 4 residues coordinate Zn(2+): Cys-89, His-92, Cys-111, and His-117. Coiled coils occupy residues 127–169 (TVYS…NESD) and 203–236 (GLVASLDMQLEQAQGTQERLAQAERVLEQFGNES). A B30.2/SPRY domain is found at 275–474 (DIKLTVWKRL…LPMVLPPPSA (200 aa)). Lys-372 carries the N6-acetyllysine modification.

The protein belongs to the TRIM/RBCC family. Can form dimers and trimers. Interacts with several E2 ubiquitin-conjugating enzymes, including UBE2L6, UBE2E1, UBE2E3. No interaction with UBE2H. Interacts with BECN1. Interacts with SQSTM1. Interacts with NLRP3. Post-translationally, auto-ubiquitinated. Acetylated by EP300 and KAT2B. HDAC6 drives TRIM50 deacetylation. Acetylation antagonizes with TRIM50 ubiquitination.

The protein localises to the cytoplasm. It catalyses the reaction S-ubiquitinyl-[E2 ubiquitin-conjugating enzyme]-L-cysteine + [acceptor protein]-L-lysine = [E2 ubiquitin-conjugating enzyme]-L-cysteine + N(6)-ubiquitinyl-[acceptor protein]-L-lysine.. Its function is as follows. E3 ubiquitin-protein ligase that ubiquitinates Beclin-1/BECN1 in a 'Lys-63'-dependent manner enhancing its binding to ULK1. In turn, promotes starvation-induced autophagy activation. Also interacts with p62/SQSTM1 protein and thereby induces the formation and the autophagy clearance of aggresome-associated polyubiquitinated proteins through HDAC6 interaction. Also promotes NLRP3 inflammasome activation by directly inducing NLRP3 oligomerization independent of its E3 ligase function. The chain is E3 ubiquitin-protein ligase TRIM50 (Trim50) from Rattus norvegicus (Rat).